Consider the following 285-residue polypeptide: Phosphatase YwpJ (285 aa).

The active-site Nucleophile is Asp-7. Residue Asp-7 participates in Mg(2+) binding. Leu-8 lines the phosphate pocket. Asp-9 serves as a coordination point for Mg(2+). Residues 41–42 (TG) and Lys-214 each bind phosphate. Residues Asp-237 and Ser-238 each contribute to the Mg(2+) site. Phosphate-binding positions include Asn-240 and 282–283 (KH).

This sequence belongs to the HAD-like hydrolase superfamily. Cof family. Requires Mg(2+) as cofactor.

In terms of biological role, catalyzes the dephosphorylation of phosphorylated 5-6 carbon sugars and monophosphate nucleotides (NMP) in vitro. To a lesser extent, dephosphorylates flavin mononucleotide (FMN) in vitro. The sequence is that of Phosphatase YwpJ (ywpJ) from Bacillus subtilis (strain 168).